Here is a 167-residue protein sequence, read N- to C-terminus: MTNNSERKRLEKRIAQLCKFIGRSPWVFHVNSGSCNGCDIEIIAALTPRYDAERFGVKLVGSPRHADILLVTGPVTNQSLERVKLVYEQTPDPKIVIAIGACPTGGSVFYESPFTNAPLDRIIPVDVFVPGCPPRPEAILHGVVLALEKLAKMIKGEVPPEEGEENE.

4 residues coordinate [4Fe-4S] cluster: C35, C38, C102, and C132.

This sequence belongs to the complex I 20 kDa subunit family. As to quaternary structure, the membrane-bound hydrogenase complex is composed of MbhK and MbhL, but may also contain MbhJ. It depends on [4Fe-4S] cluster as a cofactor.

It is found in the cell membrane. The catalysed reaction is H2 + 2 oxidized [2Fe-2S]-[ferredoxin] = 2 reduced [2Fe-2S]-[ferredoxin] + 2 H(+). Its activity is regulated as follows. Inhibited by 0.1 mM Cu(2+). Functionally, probable subunit of a hydrogen-evolving hydrogenase that utilizes protons both as a substrate for hydrogen production and proton translocation. Acts by coupling the redox reaction via ferredoxin and iron-sulfur (Fe-S) clusters to proton translocation across the membrane, thereby conserving the redox energy in a proton gradient. This is Probable membrane-bound hydrogenase subunit mbhJ from Pyrococcus furiosus (strain ATCC 43587 / DSM 3638 / JCM 8422 / Vc1).